We begin with the raw amino-acid sequence, 329 residues long: Endochitinase A (329 aa).

The first 23 residues, Met-1–Ala-23, serve as a signal peptide directing secretion. In terms of domain architecture, Chitin-binding type-1 spans Glu-24–Gly-65. Intrachain disulfides connect Cys-26-Cys-41, Cys-35-Cys-47, Cys-40-Cys-54, and Cys-59-Cys-63. 4-hydroxyproline; partial is present on Pro-67. 4 positions are modified to 4-hydroxyproline: Pro-69, Pro-71, Pro-72, and Pro-74. Residue Pro-75 is modified to 4-hydroxyproline; partial. 3 cysteine pairs are disulfide-bonded: Cys-101–Cys-163, Cys-175–Cys-183, and Cys-282–Cys-314. The Proton donor role is filled by Glu-145. A propeptide spans Gly-323–Met-329 (removed in mature form).

Belongs to the glycosyl hydrolase 19 family. Chitinase class I subfamily. The 4-hydroxyproline residues are not glycosylated in this plant vacuolar protein.

It is found in the vacuole. The enzyme catalyses Random endo-hydrolysis of N-acetyl-beta-D-glucosaminide (1-&gt;4)-beta-linkages in chitin and chitodextrins.. Defense against chitin-containing fungal pathogens. The chain is Endochitinase A (CHN48) from Nicotiana tabacum (Common tobacco).